Here is a 353-residue protein sequence, read N- to C-terminus: uncharacterized protein (353 aa).

A signal peptide spans 1-30 (MHLRHLFSSRLRGSLLLGSLLVVSSFSTQA).

Monomer.

This is an uncharacterized protein from Escherichia coli (strain K12).